A 146-amino-acid polypeptide reads, in one-letter code: Large ribosomal subunit protein uL15 (146 aa).

Basic and acidic residues predominate over residues 1–13; it reads MKLHELKPSEGSR. A disordered region spans residues 1-57; that stretch reads MKLHELKPSEGSRKTRNRVGRGIGSGNGKTAGKGHKGQNARSGGGVRPGFEGGQMPL. Gly residues-rich tracts occupy residues 21 to 31 and 42 to 52; these read RGIGSGNGKTA and SGGGVRPGFEG.

It belongs to the universal ribosomal protein uL15 family. As to quaternary structure, part of the 50S ribosomal subunit.

Its function is as follows. Binds to the 23S rRNA. The polypeptide is Large ribosomal subunit protein uL15 (Bacillus subtilis (strain 168)).